The following is a 387-amino-acid chain: Chlorophyll synthase, chloroplastic (387 aa).

The transit peptide at 1 to 57 (MTSILNTVSTIHSSRVTSVDRVGVLSLRNSDSVEFTRRRSGFSTLIYESPGRRFVVR) directs the protein to the chloroplast. Positions 62 to 81 (DTDKVKSQTPDKAPAGGSSI) are disordered. Helical transmembrane passes span 182-202 (VITQVWVLLLGGLGIAGILDV), 210-230 (TVFYLALGGSLLSYIYSAPPL), 241-261 (FALGASYISLPWWAGQALFGT), 266-286 (VVVLTLLYSIAGLGIAIVNDF), 311-331 (WICVGAIDITQLSVAGYLLAS), 336-356 (YALALVALIIPQIVFQFKYFL), and 364-384 (VKYQASAQPFLVLGIFVTALA).

This sequence belongs to the UbiA prenyltransferase family. Chlorophyll synthase subfamily. In terms of tissue distribution, low level in flower buds, flowers, stems, leaves, greening cotyledons and immature siliques, but not in mature siliques or seeds.

The protein resides in the plastid. Its subcellular location is the chloroplast membrane. The catalysed reaction is phytyl diphosphate + chlorophyllide a + H(+) = chlorophyll a + diphosphate. It functions in the pathway porphyrin-containing compound metabolism; chlorophyll biosynthesis. In terms of biological role, involved in one of the last steps of the biosynthesis of chlorophyll a. Catalyzes the esterification of chlorophillide a or b with a preference for geranylgeranyldiphosphate (GGPP) rather than for phytyldiphosphate (PhyPP). This is Chlorophyll synthase, chloroplastic (CHLG) from Arabidopsis thaliana (Mouse-ear cress).